The chain runs to 207 residues: Ribonuclease HII (207 aa).

Positions 18 to 207 (TYLSGSDEAG…PIKKISKETS (190 aa)) constitute an RNase H type-2 domain. A divalent metal cation-binding residues include D24, E25, and D116.

This sequence belongs to the RNase HII family. The cofactor is Mn(2+). It depends on Mg(2+) as a cofactor.

It is found in the cytoplasm. The catalysed reaction is Endonucleolytic cleavage to 5'-phosphomonoester.. Its function is as follows. Endonuclease that specifically degrades the RNA of RNA-DNA hybrids. In Mycoplasma mycoides subsp. mycoides SC (strain CCUG 32753 / NCTC 10114 / PG1), this protein is Ribonuclease HII.